The following is a 192-amino-acid chain: Signal peptidase complex catalytic subunit sec11 (192 aa).

The Cytoplasmic segment spans residues 1 to 18 (MLSFLSSNLSSTRQSMAQ). Residues 19-39 (VLNFALVLSTAFMLWKGLSVF) form a helical; Signal-anchor for type II membrane protein membrane-spanning segment. Over 40-192 (TASSSPIVVV…GLMVILQREQ (153 aa)) the chain is Lumenal. Active-site charge relay system residues include S53, H92, and D133. Residues 177–188 (VLLGIMGLMVIL) are C-terminal short (CTS) helix.

This sequence belongs to the peptidase S26B family. In terms of assembly, component of the signal peptidase complex (SPC) composed of a catalytic subunit SEC11 and three accessory subunits SPC1, SPC2 and SPC3. The complex induces a local thinning of the ER membrane which is used to measure the length of the signal peptide (SP) h-region of protein substrates. This ensures the selectivity of the complex towards h-regions shorter than 18-20 amino acids. SPC associates with the translocon complex.

The protein localises to the endoplasmic reticulum membrane. It catalyses the reaction Cleavage of hydrophobic, N-terminal signal or leader sequences from secreted and periplasmic proteins.. Functionally, catalytic component of the signal peptidase complex (SPC) which catalyzes the cleavage of N-terminal signal sequences from nascent proteins as they are translocated into the lumen of the endoplasmic reticulum. Specifically cleaves N-terminal signal peptides that contain a hydrophobic alpha-helix (h-region) shorter than 18-20 amino acids. This Aspergillus fumigatus (strain CBS 144.89 / FGSC A1163 / CEA10) (Neosartorya fumigata) protein is Signal peptidase complex catalytic subunit sec11 (sec11).